Consider the following 319-residue polypeptide: Acetyl-coenzyme A carboxylase carboxyl transferase subunit alpha (319 aa).

A CoA carboxyltransferase C-terminal domain is found at Ala38–Glu292.

This sequence belongs to the AccA family. As to quaternary structure, acetyl-CoA carboxylase is a heterohexamer composed of biotin carboxyl carrier protein (AccB), biotin carboxylase (AccC) and two subunits each of ACCase subunit alpha (AccA) and ACCase subunit beta (AccD).

Its subcellular location is the cytoplasm. It catalyses the reaction N(6)-carboxybiotinyl-L-lysyl-[protein] + acetyl-CoA = N(6)-biotinyl-L-lysyl-[protein] + malonyl-CoA. Its pathway is lipid metabolism; malonyl-CoA biosynthesis; malonyl-CoA from acetyl-CoA: step 1/1. Component of the acetyl coenzyme A carboxylase (ACC) complex. First, biotin carboxylase catalyzes the carboxylation of biotin on its carrier protein (BCCP) and then the CO(2) group is transferred by the carboxyltransferase to acetyl-CoA to form malonyl-CoA. This is Acetyl-coenzyme A carboxylase carboxyl transferase subunit alpha from Cereibacter sphaeroides (strain ATCC 17029 / ATH 2.4.9) (Rhodobacter sphaeroides).